The primary structure comprises 425 residues: MTRLDSVERAVADIAAGKAVIVIDDEDRENEGDLIFAAEKATPEMVAFMVRYTSGYLCVPLDGAICDRLGLLPMYAVNQDKHGTAYTVTVDARNGVGTGISASDRATTMRLLADPTSIAEDFTRPGHVVPLRAKDGGVLRRPGHTEAAVDLARMAGLQPAGAICEIVSQKDEGSMAQTDELRVFADEHDLAMITIADLIEWRRKHEKHIERIAEARIPTRHGEFRAIGYTSIYEEVEHVALVRGEIAGPNSDGDDVLVRVHSECLTGDVFGSRRCDCGPQLDAAMAMVAREGRGIVLYMRGHEGRGIGLMHKLQAYQLQDAGEDTVDANLKLGFPADARDYGIGAQILVDLGVRSMRLLTNNPAKRVGLDGYGLHIIERVPLPVRANAENIRYLMTKRDKMGHDLAGLDDFHESVHLPGEFGGAL.

The segment at methionine 1–lysine 204 is DHBP synthase. D-ribulose 5-phosphate contacts are provided by residues arginine 28 to glutamate 29, aspartate 33, arginine 141 to threonine 145, and glutamate 165. Glutamate 29 contributes to the Mg(2+) binding site. Histidine 144 contacts Mg(2+). Residues histidine 205–leucine 425 are GTP cyclohydrolase II. Arginine 259 to glutamate 263 contacts GTP. Zn(2+) contacts are provided by cysteine 264, cysteine 275, and cysteine 277. GTP-binding positions include glutamine 280, glutamate 303 to arginine 305, and threonine 325. The active-site Proton acceptor; for GTP cyclohydrolase activity is the aspartate 337. Arginine 339 acts as the Nucleophile; for GTP cyclohydrolase activity in catalysis. 2 residues coordinate GTP: threonine 360 and lysine 365.

In the N-terminal section; belongs to the DHBP synthase family. This sequence in the C-terminal section; belongs to the GTP cyclohydrolase II family. Mg(2+) is required as a cofactor. The cofactor is Mn(2+). Requires Zn(2+) as cofactor.

It catalyses the reaction D-ribulose 5-phosphate = (2S)-2-hydroxy-3-oxobutyl phosphate + formate + H(+). The enzyme catalyses GTP + 4 H2O = 2,5-diamino-6-hydroxy-4-(5-phosphoribosylamino)-pyrimidine + formate + 2 phosphate + 3 H(+). Its pathway is cofactor biosynthesis; riboflavin biosynthesis; 2-hydroxy-3-oxobutyl phosphate from D-ribulose 5-phosphate: step 1/1. The protein operates within cofactor biosynthesis; riboflavin biosynthesis; 5-amino-6-(D-ribitylamino)uracil from GTP: step 1/4. Its function is as follows. Catalyzes the conversion of D-ribulose 5-phosphate to formate and 3,4-dihydroxy-2-butanone 4-phosphate. In terms of biological role, catalyzes the conversion of GTP to 2,5-diamino-6-ribosylamino-4(3H)-pyrimidinone 5'-phosphate (DARP), formate and pyrophosphate. The protein is Riboflavin biosynthesis protein RibBA of Mycobacterium avium (strain 104).